The following is a 296-amino-acid chain: 4-hydroxy-tetrahydrodipicolinate synthase (296 aa).

Residue Thr49 participates in pyruvate binding. The active-site Proton donor/acceptor is Tyr137. Catalysis depends on Lys166, which acts as the Schiff-base intermediate with substrate. A pyruvate-binding site is contributed by Ile208.

This sequence belongs to the DapA family. Homotetramer; dimer of dimers.

Its subcellular location is the cytoplasm. It carries out the reaction L-aspartate 4-semialdehyde + pyruvate = (2S,4S)-4-hydroxy-2,3,4,5-tetrahydrodipicolinate + H2O + H(+). It participates in amino-acid biosynthesis; L-lysine biosynthesis via DAP pathway; (S)-tetrahydrodipicolinate from L-aspartate: step 3/4. Catalyzes the condensation of (S)-aspartate-beta-semialdehyde [(S)-ASA] and pyruvate to 4-hydroxy-tetrahydrodipicolinate (HTPA). In Azobacteroides pseudotrichonymphae genomovar. CFP2, this protein is 4-hydroxy-tetrahydrodipicolinate synthase.